The following is a 387-amino-acid chain: Killer cell lectin-like receptor subfamily G member 2 (387 aa).

A disordered region spans residues 1 to 105 (MEPPQVPAEA…SGEPAPASWA (105 aa)). The span at 15 to 27 (ASEDSPRPERTGW) shows a compositional bias: basic and acidic residues. S143 carries the post-translational modification Phosphoserine. The tract at residues 155 to 174 (QWLPRAPSPGSTWSRGSPLA) is disordered. The chain crosses the membrane as a helical span at residues 241–261 (WALVVMAVLLAVCTVAVVALA). The region spanning 278–383 (SQEQCYYLSE…CSSPRPWVCA (106 aa)) is the C-type lectin domain. Cystine bridges form between C299–C382 and C361–C374.

It is found in the membrane. In Mus musculus (Mouse), this protein is Killer cell lectin-like receptor subfamily G member 2 (Klrg2).